We begin with the raw amino-acid sequence, 134 residues long: Large ribosomal subunit protein bL17 (134 aa).

The protein belongs to the bacterial ribosomal protein bL17 family. As to quaternary structure, part of the 50S ribosomal subunit. Contacts protein L32.

In Anaplasma marginale (strain Florida), this protein is Large ribosomal subunit protein bL17.